The primary structure comprises 526 residues: Ribonuclease Y (526 aa).

The chain crosses the membrane as a helical span at residues 10–30 (ITFILLIVVGALGGALVGYFI). Residues 216–279 (TVTVVEIPNE…EVAKRALTIL (64 aa)) enclose the KH domain. Residues 342–435 (VLKHSIEVAF…VAAADALSAA (94 aa)) form the HD domain.

This sequence belongs to the RNase Y family.

It is found in the cell membrane. Functionally, endoribonuclease that initiates mRNA decay. The polypeptide is Ribonuclease Y (Acholeplasma laidlawii (strain PG-8A)).